The chain runs to 376 residues: Lipoprotein p33 (376 aa).

The signal sequence occupies residues 1–30 (MKIKKIKLLKALALTGAFGIVATVPVIVYS). C31 carries N-palmitoyl cysteine lipidation. A lipid anchor (S-diacylglycerol cysteine) is attached at C31. The disordered stretch occupies residues 35 to 59 (DNNGGTGDNNTGGGGSGTDQQQGTT). The span at 38 to 51 (GGTGDNNTGGGGSG) shows a compositional bias: gly residues.

The protein belongs to the p35 lipoprotein family.

It localises to the cell membrane. This Malacoplasma penetrans (Mycoplasma penetrans) protein is Lipoprotein p33.